The primary structure comprises 505 residues: Holliday junction branch migration ATPase PINA (505 aa).

The 105-residue stretch at 2 to 106 folds into the PINc domain; it reads NDLMLDKSAL…IVTADETQKK (105 aa). The tract at residues 434-505 is KH domain; the sequence is PVNRGITMSN…NIKIKIKLSD (72 aa). The required for maximum interaction with Hjc and Hjm stretch occupies residues 493-505; the sequence is KKNNIKIKIKLSD.

As to quaternary structure, homohexamer; the central pore (25-31 Angstroms) is large enough to hold dsDNA. In PDB:5F4H two of the 6 subunits are in an ATP-binding competent conformation. Interacts with Holliday junction resolvase Hjc; in the presence of HJ DNA this interaction decreases branch migration but not Y-DNA unwinding. Interacts with helicase Hjm (hel308) which decreases the DNA helicase activity of Hjm. Ca(2+) is required as a cofactor.

The enzyme catalyses ATP + H2O = ADP + phosphate + H(+). Promotes Holliday junction (HJ) branch migration and unwinds Y-shaped DNA (but not replication forks or dsDNA) in an ATP hydrolysis-dependent manner. Stimulates cleavage by HJ resolvase Hjc. Unwinds Y-shaped and 3'-flap DNA substrates. In the absence of other proteins stabilizes replication forks (prevents spontaneous unwinding); Hjc, Hjm (Hel308) and PINA coordinate HJ migration and cleavage of replication forks in a coordinated way. Inhibits the 5'-3' (but not 3'-5') helicase activity of helicase Hjm (Hel308) on overhang DNA. Probably acts as an ATP-dependent pump that pulls DNA through the hexamer. This Saccharolobus islandicus (strain REY15A) (Sulfolobus islandicus) protein is Holliday junction branch migration ATPase PINA.